A 321-amino-acid polypeptide reads, in one-letter code: MKDLPARRLLLVHAHPDDESINNGATMARYAAEGAHVTLVTCTLGEEGEVIPPALARLTADRDDALGPHRVGELAAAMRELGVDDHRFLGGAGRYRDSGMMGAEQNGRPGSFWSTSVDEAAAHLVEVIREVRPQVLVTYDPDGGYGHPDHIQAHRVAMRAADLAADPAYGSDAPHTVAKVYWNRVERAAAEAGFERLRTTAPGAFPGIASVDDVPGVTDREHITAEIDGSAYAGAKSAAMRAHATQIAVDGPFFALSNDLGQPLLTTECYQLVRGVPGVPEGERESDLFAGLPPATDGTGAAGAPSATGAANPADAEGGAA.

Zn(2+) is bound by residues H15, D18, and H150. Positions 280-321 are disordered; sequence PEGERESDLFAGLPPATDGTGAAGAPSATGAANPADAEGGAA. The span at 290–321 shows a compositional bias: low complexity; it reads AGLPPATDGTGAAGAPSATGAANPADAEGGAA.

This sequence belongs to the MshB deacetylase family. Zn(2+) is required as a cofactor.

It catalyses the reaction 1D-myo-inositol 2-acetamido-2-deoxy-alpha-D-glucopyranoside + H2O = 1D-myo-inositol 2-amino-2-deoxy-alpha-D-glucopyranoside + acetate. In terms of biological role, catalyzes the deacetylation of 1D-myo-inositol 2-acetamido-2-deoxy-alpha-D-glucopyranoside (GlcNAc-Ins) in the mycothiol biosynthesis pathway. The protein is 1D-myo-inositol 2-acetamido-2-deoxy-alpha-D-glucopyranoside deacetylase of Streptomyces griseus subsp. griseus (strain JCM 4626 / CBS 651.72 / NBRC 13350 / KCC S-0626 / ISP 5235).